Reading from the N-terminus, the 567-residue chain is MRPAAGEAGAGLRWLGLAALLAALLGTPCAAAHHEDKAISVPDHGFCQPISIPLCTDIAYNQTILPNLLGHTNQEDAGLEVHQFYPLVKVQCSAELKFFLCSMYAPVCTVLEQAIPPCRSLCERARQGCEALMNKFGFQWPERLRCENFPVHGAGEICVGQNTSDAPPGPGGAGGRGATAQPTAGYLPDLLTPPQPAAGFSFSCPRQLKVPPYLGYRFLGERDCGAPCEPGRPNGLMYFKEAEVRFARLWVGVWSVLCCASTLFTVLTYLVDMRRFSYPERPIIFLSGCYFMVAVAYAAGFLLEERVVCLERFSEDGYRTVAQGTKKEGCTILFMILYFFGMASSIWWVILSLTWFLAAGMKWGHEAIEANSQYFHLAAWAVPAVKTITILAMGQVDGDVLSGVCYVGIYSVDSLRGFVLAPLFVYLFIGTSFLLAGFVSLFRIRTIMKHDGTKTEKLEKLMVRIGVFSVLYTVPATIVVACYFYEQAFRSTWEKTWLLQTCKTYAVPCPSHFAPMSPDFTVFMIKYLMTMIVGITTGFWIWSGKTLQSWRRFYHRLSTGSKGETAV.

The N-terminal stretch at 1–31 (MRPAAGEAGAGLRWLGLAALLAALLGTPCAA) is a signal peptide. At 32 to 250 (AHHEDKAISV…EAEVRFARLW (219 aa)) the chain is on the extracellular side. Residues 42-161 (PDHGFCQPIS…HGAGEICVGQ (120 aa)) form the FZ domain. Cystine bridges form between Cys-47–Cys-108, Cys-55–Cys-101, Cys-92–Cys-129, Cys-118–Cys-158, and Cys-122–Cys-146. Asn-61 carries an N-linked (GlcNAc...) asparagine glycan. Asn-162 carries N-linked (GlcNAc...) asparagine glycosylation. The helical transmembrane segment at 251–271 (VGVWSVLCCASTLFTVLTYLV) threads the bilayer. Residues 272–282 (DMRRFSYPERP) are Cytoplasmic-facing. The chain crosses the membrane as a helical span at residues 283 to 303 (IIFLSGCYFMVAVAYAAGFLL). Topologically, residues 304–330 (EERVVCLERFSEDGYRTVAQGTKKEGC) are extracellular. Residues 331 to 351 (TILFMILYFFGMASSIWWVIL) form a helical membrane-spanning segment. Residues 352-373 (SLTWFLAAGMKWGHEAIEANSQ) are Cytoplasmic-facing. Residues 374-394 (YFHLAAWAVPAVKTITILAMG) traverse the membrane as a helical segment. The Extracellular portion of the chain corresponds to 395–417 (QVDGDVLSGVCYVGIYSVDSLRG). The helical transmembrane segment at 418-438 (FVLAPLFVYLFIGTSFLLAGF) threads the bilayer. Topologically, residues 439–464 (VSLFRIRTIMKHDGTKTEKLEKLMVR) are cytoplasmic. A helical membrane pass occupies residues 465-485 (IGVFSVLYTVPATIVVACYFY). Residues 486-521 (EQAFRSTWEKTWLLQTCKTYAVPCPSHFAPMSPDFT) are Extracellular-facing. The helical transmembrane segment at 522-542 (VFMIKYLMTMIVGITTGFWIW) threads the bilayer. The Cytoplasmic segment spans residues 543 to 567 (SGKTLQSWRRFYHRLSTGSKGETAV). The Lys-Thr-X-X-X-Trp motif, mediates interaction with the PDZ domain of Dvl family members motif lies at 545–550 (KTLQSW). Residues 565-567 (TAV) carry the PDZ-binding motif.

Belongs to the G-protein coupled receptor Fz/Smo family. Expressed broadly in cranial ectoderm. Also expressed in the developing somites and in other cranial placodes, including the olfactory, lens, otic placodes (lateral half of the vesicle) and epibranchial placodes. Low level of expression in all the mesoderm derivatives in the limb buds.

The protein resides in the cell membrane. The protein localises to the endosome membrane. Receptor for Wnt proteins. Most of frizzled receptors are coupled to the beta-catenin canonical signaling pathway, which leads to the activation of disheveled proteins, inhibition of GSK-3 kinase, nuclear accumulation of beta-catenin and activation of Wnt target genes. A second signaling pathway involving PKC and calcium fluxes has been seen for some family members, but it is not yet clear if it represents a distinct pathway or if it can be integrated in the canonical pathway, as PKC seems to be required for Wnt-mediated inactivation of GSK-3 kinase. Both pathways seem to involve interactions with G-proteins. May be involved in transduction and intercellular transmission of polarity information during tissue morphogenesis and/or in differentiated tissues. The polypeptide is Frizzled-7 (FZD7) (Gallus gallus (Chicken)).